Reading from the N-terminus, the 333-residue chain is Acetyl-coenzyme A carboxylase carboxyl transferase subunit alpha (333 aa).

Residues 48–308 (LLEQKVDALR…KEMLVEELRD (261 aa)) enclose the CoA carboxyltransferase C-terminal domain.

It belongs to the AccA family. In terms of assembly, acetyl-CoA carboxylase is a heterohexamer composed of biotin carboxyl carrier protein (AccB), biotin carboxylase (AccC) and two subunits each of ACCase subunit alpha (AccA) and ACCase subunit beta (AccD).

It localises to the cytoplasm. The enzyme catalyses N(6)-carboxybiotinyl-L-lysyl-[protein] + acetyl-CoA = N(6)-biotinyl-L-lysyl-[protein] + malonyl-CoA. It functions in the pathway lipid metabolism; malonyl-CoA biosynthesis; malonyl-CoA from acetyl-CoA: step 1/1. Component of the acetyl coenzyme A carboxylase (ACC) complex. First, biotin carboxylase catalyzes the carboxylation of biotin on its carrier protein (BCCP) and then the CO(2) group is transferred by the carboxyltransferase to acetyl-CoA to form malonyl-CoA. The sequence is that of Acetyl-coenzyme A carboxylase carboxyl transferase subunit alpha from Chlorobium limicola (strain DSM 245 / NBRC 103803 / 6330).